The primary structure comprises 272 residues: METYAVFGNPIAHSKSPFIHQQFAQQLNIEHPYGRVLAPINDFINTLNAFFSAGGKGANVTVPFKEEAFARADELTERATLAGAVNTLKRLEDGRLLGDNTDGIGLLSDLERLSFIRPGLRILLIGAGGASRGVLLPLLSLDCAVTITNRTVSRAEELAKLFAHTGSIHALGMDELEGHEFDLIINATSSGISGDIPAIPASLIHSGMCCYDMFYQKGKTPFLAWCELRGSKRNADGLGMLVAQAAHAFLLWHGVLPDIEPVIKQLQEELSA.

Shikimate contacts are provided by residues 14 to 16 and Thr-61; that span reads SKS. Catalysis depends on Lys-65, which acts as the Proton acceptor. Residue Glu-77 coordinates NADP(+). Shikimate-binding residues include Asn-86 and Asp-102. NADP(+)-binding positions include 126–130, 149–154, and Met-213; these read GAGGA and NRTVSR. Residue Tyr-215 participates in shikimate binding. Gly-237 lines the NADP(+) pocket.

Belongs to the shikimate dehydrogenase family. In terms of assembly, homodimer.

The catalysed reaction is shikimate + NADP(+) = 3-dehydroshikimate + NADPH + H(+). Its pathway is metabolic intermediate biosynthesis; chorismate biosynthesis; chorismate from D-erythrose 4-phosphate and phosphoenolpyruvate: step 4/7. Involved in the biosynthesis of the chorismate, which leads to the biosynthesis of aromatic amino acids. Catalyzes the reversible NADPH linked reduction of 3-dehydroshikimate (DHSA) to yield shikimate (SA). This is Shikimate dehydrogenase (NADP(+)) from Escherichia coli (strain SMS-3-5 / SECEC).